A 301-amino-acid chain; its full sequence is MSVRELVVLGTASQVPTRHRNHNGYLLRWDGEGILFDPGEGTQRQMLRAGVAAHDLHRICVTHFHGDHSLGLAGVIQRINLDRVPHEITAHYPGSGQRFFERLRYATAYRETVALTEAPVAADGVIADTPAYVLETRRLSHPVESFGYRLVEPDGRRMLPERLAAHGIKGPDVGRIQREGAIGGVSLEDVSEVRHGQRFAFVMDTRLCEGVHALAEGCDMLVIESTFLDGDHQLAEDHGHLTAGQAGRVAKDAGVRHLVLTHFSQRYSDPDAFEREARAGGFEGELTVAHDLLRVPVPKRH.

H63, H65, D67, H68, H141, D204, and H262 together coordinate Zn(2+). The active-site Proton acceptor is D67.

The protein belongs to the RNase Z family. Homodimer. The cofactor is Zn(2+).

The catalysed reaction is Endonucleolytic cleavage of RNA, removing extra 3' nucleotides from tRNA precursor, generating 3' termini of tRNAs. A 3'-hydroxy group is left at the tRNA terminus and a 5'-phosphoryl group is left at the trailer molecule.. Zinc phosphodiesterase, which displays some tRNA 3'-processing endonuclease activity. Probably involved in tRNA maturation, by removing a 3'-trailer from precursor tRNA. In Streptomyces avermitilis (strain ATCC 31267 / DSM 46492 / JCM 5070 / NBRC 14893 / NCIMB 12804 / NRRL 8165 / MA-4680), this protein is Ribonuclease Z.